Reading from the N-terminus, the 107-residue chain is Flagellar hook-basal body complex protein FliE (107 aa).

The protein belongs to the FliE family.

Its subcellular location is the bacterial flagellum basal body. The chain is Flagellar hook-basal body complex protein FliE from Sodalis glossinidius (strain morsitans).